A 178-amino-acid polypeptide reads, in one-letter code: MSIEEIPQGADVNVIPKNEKKARELIKKLNLKQIKGISRVTFKQRGNLIYAIDSPDVYRSAAGTYVVFGEAKVDDMNQRIAEAQAQQAQQEALQKAAADAGKTEDKSPEAITADLEKASLGDKKAEDEEEDEGEIDETGLDPKDIEIVVEQTQVSRAKAVKALRNHDGDMVNAIMDLS.

The NAC-A/B domain occupies 16–80; it reads PKNEKKAREL…AKVDDMNQRI (65 aa). Residues 82-100 show a composition bias toward low complexity; the sequence is EAQAQQAQQEALQKAAADA. Residues 82 to 145 are disordered; that stretch reads EAQAQQAQQE…DETGLDPKDI (64 aa). Basic and acidic residues predominate over residues 101–126; the sequence is GKTEDKSPEAITADLEKASLGDKKAE. Over residues 127–139 the composition is skewed to acidic residues; the sequence is DEEEDEGEIDETG. In terms of domain architecture, UBA spans 140 to 178; it reads LDPKDIEIVVEQTQVSRAKAVKALRNHDGDMVNAIMDLS.

It belongs to the NAC-alpha family. As to quaternary structure, part of the nascent polypeptide-associated complex (NAC), consisting of EGD2 and EGD1. NAC associates with ribosomes via EGD1.

It is found in the cytoplasm. Its subcellular location is the nucleus. Its function is as follows. Component of the nascent polypeptide-associated complex (NAC), a dynamic component of the ribosomal exit tunnel, protecting the emerging polypeptides from interaction with other cytoplasmic proteins to ensure appropriate nascent protein targeting. The NAC complex also promotes mitochondrial protein import by enhancing productive ribosome interactions with the outer mitochondrial membrane and blocks the inappropriate interaction of ribosomes translating non-secretory nascent polypeptides with translocation sites in the membrane of the endoplasmic reticulum. EGD2 may also be involved in transcription regulation. This chain is Nascent polypeptide-associated complex subunit alpha (EGD2), found in Candida albicans (strain SC5314 / ATCC MYA-2876) (Yeast).